The following is a 775-amino-acid chain: Acetamidase regulatory protein (775 aa).

Positions 1 to 15 (MSSTAHNSQPSTGNG) are enriched in polar residues. Residues 1–20 (MSSTAHNSQPSTGNGVTKRK) form a disordered region. The zn(2)-C6 fungal-type DNA-binding region spans 26–59 (CIHCHRRKVRCDARIVGLPCSNCRSAGKADCRIH). Residues 126–153 (PHSSYTNGNHLSNNRGSQPITETQTFTR) are compositionally biased toward polar residues. 2 disordered regions span residues 126–159 (PHSS…GADR) and 630–699 (ATSE…HQNQ). Over residues 630 to 644 (ATSERPRRFSTHDQN) the composition is skewed to basic and acidic residues. A compositionally biased stretch (pro residues) spans 674–689 (PRPPYEVPTPESPRMP).

It localises to the nucleus. Functionally, positively regulates the expression of genes involved in the catabolism of certain amides, omega amino acids, and lactams. This is Acetamidase regulatory protein (amdR) from Aspergillus oryzae (strain ATCC 42149 / RIB 40) (Yellow koji mold).